Here is a 274-residue protein sequence, read N- to C-terminus: 2,3,4,5-tetrahydropyridine-2,6-dicarboxylate N-succinyltransferase (274 aa).

Belongs to the transferase hexapeptide repeat family.

Its subcellular location is the cytoplasm. The catalysed reaction is (S)-2,3,4,5-tetrahydrodipicolinate + succinyl-CoA + H2O = (S)-2-succinylamino-6-oxoheptanedioate + CoA. Its pathway is amino-acid biosynthesis; L-lysine biosynthesis via DAP pathway; LL-2,6-diaminopimelate from (S)-tetrahydrodipicolinate (succinylase route): step 1/3. The protein is 2,3,4,5-tetrahydropyridine-2,6-dicarboxylate N-succinyltransferase of Escherichia fergusonii (strain ATCC 35469 / DSM 13698 / CCUG 18766 / IAM 14443 / JCM 21226 / LMG 7866 / NBRC 102419 / NCTC 12128 / CDC 0568-73).